We begin with the raw amino-acid sequence, 241 residues long: Ribonuclease PH (241 aa).

Phosphate-binding positions include arginine 89 and 127–129; that span reads GTR.

Belongs to the RNase PH family. As to quaternary structure, homohexameric ring arranged as a trimer of dimers.

It carries out the reaction tRNA(n+1) + phosphate = tRNA(n) + a ribonucleoside 5'-diphosphate. In terms of biological role, phosphorolytic 3'-5' exoribonuclease that plays an important role in tRNA 3'-end maturation. Removes nucleotide residues following the 3'-CCA terminus of tRNAs; can also add nucleotides to the ends of RNA molecules by using nucleoside diphosphates as substrates, but this may not be physiologically important. Probably plays a role in initiation of 16S rRNA degradation (leading to ribosome degradation) during starvation. The polypeptide is Ribonuclease PH (Xanthomonas euvesicatoria pv. vesicatoria (strain 85-10) (Xanthomonas campestris pv. vesicatoria)).